The following is a 439-amino-acid chain: Glutamine synthetase (439 aa).

Residues 12 to 93 (SKIKFVQLVF…VYGFIYKDNK (82 aa)) form the GS beta-grasp domain. Residues 99–439 (PRGILKRALE…EWELERYFFL (341 aa)) enclose the GS catalytic domain. Mg(2+) is bound by residues E122 and E124. E172 is a binding site for ATP. Positions 177 and 184 each coordinate Mg(2+). G229 is a binding site for L-glutamate. H233 serves as a coordination point for Mg(2+). ATP contacts are provided by residues 235–237 (HIS) and S237. 3 residues coordinate L-glutamate: R283, E289, and R301. 3 residues coordinate ATP: R301, R306, and K313. E318 is a Mg(2+) binding site. R320 is an L-glutamate binding site.

It belongs to the glutamine synthetase family. Oligomer of 12 subunits arranged in the form of two hexagons. It depends on Mg(2+) as a cofactor.

Its subcellular location is the cytoplasm. The enzyme catalyses L-glutamate + NH4(+) + ATP = L-glutamine + ADP + phosphate + H(+). Functionally, probably involved in nitrogen metabolism via ammonium assimilation. Catalyzes the ATP-dependent biosynthesis of glutamine from glutamate and ammonia. The sequence is that of Glutamine synthetase from Pyrococcus furiosus (strain ATCC 43587 / DSM 3638 / JCM 8422 / Vc1).